The sequence spans 312 residues: Pantothenate kinase (312 aa).

Residue Gly97–Ser104 coordinates ATP.

It belongs to the prokaryotic pantothenate kinase family.

Its subcellular location is the cytoplasm. It carries out the reaction (R)-pantothenate + ATP = (R)-4'-phosphopantothenate + ADP + H(+). It functions in the pathway cofactor biosynthesis; coenzyme A biosynthesis; CoA from (R)-pantothenate: step 1/5. This Mycolicibacterium smegmatis (strain ATCC 700084 / mc(2)155) (Mycobacterium smegmatis) protein is Pantothenate kinase.